The chain runs to 200 residues: Large ribosomal subunit protein uL4 (200 aa).

Residues 38 to 68 are disordered; the sequence is GRQGSKQQKTRSDVRGGGKRPWRQKGTGRAR. The span at 54-65 shows a compositional bias: basic residues; that stretch reads GGKRPWRQKGTG.

This sequence belongs to the universal ribosomal protein uL4 family. As to quaternary structure, part of the 50S ribosomal subunit.

Functionally, one of the primary rRNA binding proteins, this protein initially binds near the 5'-end of the 23S rRNA. It is important during the early stages of 50S assembly. It makes multiple contacts with different domains of the 23S rRNA in the assembled 50S subunit and ribosome. Forms part of the polypeptide exit tunnel. The sequence is that of Large ribosomal subunit protein uL4 from Pseudomonas syringae pv. tomato (strain ATCC BAA-871 / DC3000).